The primary structure comprises 484 residues: Keratin, type I cytoskeletal 14 (484 aa).

The tract at residues 1–20 (MATCSRQFTSSSSMKGSCGI) is disordered. The head stretch occupies residues 1–120 (MATCSRQFTS…GIGDGLLVGS (120 aa)). The interval 121-156 (EKVTMQNLNDRLATYLDKVRALEEANTELEVKIRDW) is coil 1A. Residues 121 to 432 (EKVTMQNLND…RLLEGEDAHL (312 aa)) form the IF rod domain. Residues 157–174 (YQRQRPTEIKDYSPYFKT) are linker 1. Residues 175 to 266 (IEDLKSKILA…KNHEEEMASM (92 aa)) are coil 1B. Residues 267–289 (RGQVGGDVNVEMDAAPGVDLSRI) are linker 12. Residues 290-428 (LNEMRDQYEK…ATYRRLLEGE (139 aa)) form a coil 2 region. Positions 429 to 484 (DAHLSSSQFSSSSQFSSGSQSSRDVTSTNRQIRTKVMDVHDGKVVSTHEQVLRTKN) are tail. The tract at residues 431–484 (HLSSSQFSSSSQFSSGSQSSRDVTSTNRQIRTKVMDVHDGKVVSTHEQVLRTKN) is interaction with Type I keratins and keratin filaments. A compositionally biased stretch (low complexity) spans 435–450 (SQFSSSSQFSSGSQSS). The tract at residues 435 to 457 (SQFSSSSQFSSGSQSSRDVTSTN) is disordered. Ser-447 carries the phosphoserine modification.

Belongs to the intermediate filament family. In terms of assembly, heterotetramer of two type I and two type II keratins. Forms a disulfide-linked heterodimer (via 2B domains) with KRT5 (via 2B domains). Forms a heterodimer with KRT1; the interaction is more abundant in the absence of KRT5. Interacts with PLEC isoform 1C, when in a heterodimer with KRT5. Interacts with TRADD and with keratin filaments. Associates with other type I keratins. Interacts with EPPK1. Interacts with KLHL24. Interacts with PKP1 (via N-terminus) and PKP2. Post-translationally, a disulfide bond is formed between rather than within filaments and promotes the formation of a keratin filament cage around the nucleus. In terms of processing, ubiquitinated by the BCR(KLHL24) E3 ubiquitin ligase complex. As to expression, expressed in the corneal epithelium (at protein level). Expressed in the basal layer of the epidermis and the outer root sheath of hair follicles (at protein level). Expressed in the epithelial basal layer in the tail epidermis. Expressed in the parabasal cell row, basal cell layer, and suprabasal epithelial layer of the tongue.

It localises to the cytoplasm. Its subcellular location is the nucleus. In terms of biological role, the nonhelical tail domain is involved in promoting KRT5-KRT14 filaments to self-organize into large bundles and enhances the mechanical properties involved in resilience of keratin intermediate filaments in vitro. In Mus musculus (Mouse), this protein is Keratin, type I cytoskeletal 14 (Krt14).